A 266-amino-acid polypeptide reads, in one-letter code: Thymidylate synthase (266 aa).

DUMP is bound at residue Arg24. His54 serves as a coordination point for (6R)-5,10-methylene-5,6,7,8-tetrahydrofolate. 129–130 (RR) serves as a coordination point for dUMP. Residue Cys149 is the Nucleophile of the active site. Residues 169-172 (RSAD), Asn180, and 210-212 (HIY) contribute to the dUMP site. Residue Asp172 participates in (6R)-5,10-methylene-5,6,7,8-tetrahydrofolate binding. Ala265 contributes to the (6R)-5,10-methylene-5,6,7,8-tetrahydrofolate binding site.

It belongs to the thymidylate synthase family. Bacterial-type ThyA subfamily. In terms of assembly, homodimer.

It localises to the cytoplasm. It carries out the reaction dUMP + (6R)-5,10-methylene-5,6,7,8-tetrahydrofolate = 7,8-dihydrofolate + dTMP. It functions in the pathway pyrimidine metabolism; dTTP biosynthesis. Functionally, catalyzes the reductive methylation of 2'-deoxyuridine-5'-monophosphate (dUMP) to 2'-deoxythymidine-5'-monophosphate (dTMP) while utilizing 5,10-methylenetetrahydrofolate (mTHF) as the methyl donor and reductant in the reaction, yielding dihydrofolate (DHF) as a by-product. This enzymatic reaction provides an intracellular de novo source of dTMP, an essential precursor for DNA biosynthesis. This chain is Thymidylate synthase, found in Mycobacterium avium (strain 104).